Consider the following 255-residue polypeptide: Large ribosomal subunit protein uL4 (255 aa).

This sequence belongs to the universal ribosomal protein uL4 family. Part of the 50S ribosomal subunit.

In terms of biological role, one of the primary rRNA binding proteins, this protein initially binds near the 5'-end of the 23S rRNA. It is important during the early stages of 50S assembly. It makes multiple contacts with different domains of the 23S rRNA in the assembled 50S subunit and ribosome. Its function is as follows. Forms part of the polypeptide exit tunnel. The protein is Large ribosomal subunit protein uL4 of Pyrococcus horikoshii (strain ATCC 700860 / DSM 12428 / JCM 9974 / NBRC 100139 / OT-3).